We begin with the raw amino-acid sequence, 236 residues long: MTKIYWNINLEEMMEAGVHFGHGTRKWNPKMAPYISAKRKGIHITNLTGTARFLSEACDLVFDAASRGKQFLIVGTKNKAADSVARASIRARCHYVNKKWLGGMLTNWSTTETRLHKFRDLRMEQKMGGLNRLPKRDATILKRQLARLQTYLGGMKYMTGLPDIAIIVDQHKEYTALQECITLGIPTICLIDTNCDPNLSDISIPANDDAISSIRFILNKLVFAICEGRSSYIINP.

The protein belongs to the universal ribosomal protein uS2 family.

Its subcellular location is the plastid. It is found in the chloroplast. The protein is Small ribosomal subunit protein uS2c (rps2) of Ipomoea purpurea (Common morning glory).